Reading from the N-terminus, the 272-residue chain is NH(3)-dependent NAD(+) synthetase (272 aa).

G45–S52 serves as a coordination point for ATP. Position 51 (D51) interacts with Mg(2+). Position 138 (R138) interacts with deamido-NAD(+). ATP is bound at residue T158. E163 is a Mg(2+) binding site. Deamido-NAD(+)-binding residues include K171 and D178. ATP is bound by residues K187 and T209. Deamido-NAD(+) is bound at residue H258 to K259.

This sequence belongs to the NAD synthetase family. As to quaternary structure, homodimer.

The catalysed reaction is deamido-NAD(+) + NH4(+) + ATP = AMP + diphosphate + NAD(+) + H(+). It functions in the pathway cofactor biosynthesis; NAD(+) biosynthesis; NAD(+) from deamido-NAD(+) (ammonia route): step 1/1. Functionally, catalyzes the ATP-dependent amidation of deamido-NAD to form NAD. Uses ammonia as a nitrogen source. The protein is NH(3)-dependent NAD(+) synthetase of Bacillus cereus (strain G9842).